We begin with the raw amino-acid sequence, 890 residues long: Alanine--tRNA ligase (890 aa).

Residues His-572, His-576, Cys-674, and His-678 each coordinate Zn(2+).

This sequence belongs to the class-II aminoacyl-tRNA synthetase family. Zn(2+) is required as a cofactor.

It localises to the cytoplasm. The catalysed reaction is tRNA(Ala) + L-alanine + ATP = L-alanyl-tRNA(Ala) + AMP + diphosphate. Functionally, catalyzes the attachment of alanine to tRNA(Ala) in a two-step reaction: alanine is first activated by ATP to form Ala-AMP and then transferred to the acceptor end of tRNA(Ala). Also edits incorrectly charged Ser-tRNA(Ala) and Gly-tRNA(Ala) via its editing domain. The polypeptide is Alanine--tRNA ligase (Saccharopolyspora erythraea (strain ATCC 11635 / DSM 40517 / JCM 4748 / NBRC 13426 / NCIMB 8594 / NRRL 2338)).